The primary structure comprises 599 residues: Elongation factor 4 (599 aa).

The 183-residue stretch at 4-186 folds into the tr-type G domain; that stretch reads SKIRNFSIIA…SIVEKVPAPK (183 aa). GTP is bound by residues 16-21 and 133-136; these read DHGKST and NKVD.

Belongs to the TRAFAC class translation factor GTPase superfamily. Classic translation factor GTPase family. LepA subfamily.

It localises to the cell inner membrane. The catalysed reaction is GTP + H2O = GDP + phosphate + H(+). In terms of biological role, required for accurate and efficient protein synthesis under certain stress conditions. May act as a fidelity factor of the translation reaction, by catalyzing a one-codon backward translocation of tRNAs on improperly translocated ribosomes. Back-translocation proceeds from a post-translocation (POST) complex to a pre-translocation (PRE) complex, thus giving elongation factor G a second chance to translocate the tRNAs correctly. Binds to ribosomes in a GTP-dependent manner. This is Elongation factor 4 from Syntrophotalea carbinolica (strain DSM 2380 / NBRC 103641 / GraBd1) (Pelobacter carbinolicus).